Consider the following 71-residue polypeptide: Large ribosomal subunit protein uL30 (71 aa).

It belongs to the universal ribosomal protein uL30 family. In terms of assembly, part of the 50S ribosomal subunit.

In Borreliella burgdorferi (strain ATCC 35210 / DSM 4680 / CIP 102532 / B31) (Borrelia burgdorferi), this protein is Large ribosomal subunit protein uL30.